Consider the following 132-residue polypeptide: Small ribosomal subunit protein eS12 (132 aa).

Belongs to the eukaryotic ribosomal protein eS12 family.

The sequence is that of Small ribosomal subunit protein eS12 (rps12) from Oreochromis niloticus (Nile tilapia).